A 978-amino-acid polypeptide reads, in one-letter code: Sensor histidine kinase TodS (978 aa).

The PAS 1 domain occupies 32 to 103 (CEEHARIIFD…TQKRLVETAS (72 aa)). The 55-residue stretch at 108–162 (VRCDVEILGKSGGREVIAVDFSLLPICNEEGSIVYLLAEGRNITDKKKAEAMLAL) folds into the PAC 1 domain. One can recognise a Histidine kinase 1 domain in the interval 187–405 (KVSHELRTPL…LFQVKLPLNA (219 aa)). His-190 bears the Phosphohistidine; by autocatalysis mark. The Response regulatory domain occupies 452–567 (RVLIVEDNPD…ELRARVSNLV (116 aa)). Asp-500 is subject to 4-aspartylphosphate. A PAS 2 domain is found at 611 to 681 (SEARWKAVYE…QRLANLLQGG (71 aa)). Residues 685-737 (YSVERSYLCKNGSTIWANASVSLMPQRVGESPVILQIIDDITEKKQAQENLNQ) form the PAC 2 domain. The 218-residue stretch at 757 to 974 (YIAHEINQPL…CFLVSIPARQ (218 aa)) folds into the Histidine kinase 2 domain. The residue at position 760 (His-760) is a Phosphohistidine.

Autophosphorylated. Activation requires a sequential transfer of a phosphate group from a His in the primary transmitter domain, to an Asp in the receiver domain and to a His in the secondary transmitter domain.

It is found in the cytoplasm. The catalysed reaction is ATP + protein L-histidine = ADP + protein N-phospho-L-histidine.. Activity is regulated by agonists and antagonists. Binding of agonists such as toluene or benzene to TodS stimulates autophosphorylation at His-190. Activity is inhibited by antagonists such as o-xylene, o-chlorotoluene and trimethylbenzene isomers, which bind to TodS but do not stimulate autophosphorylation. Agonists and antagonists bind to the same PAS domain. Member of the two-component regulatory system TodS/TodT involved in the regulation of toluene degradation. Phosphorylates TodT via a four-step phosphorelay in response to toluene. Can also be induced by benzene and ethylbenzene. In Pseudomonas putida (strain DOT-T1E), this protein is Sensor histidine kinase TodS (todS).